The following is a 570-amino-acid chain: Potassium-transporting ATPase potassium-binding subunit (570 aa).

The next 11 helical transmembrane spans lie at 7–27, 65–85, 95–115, 135–155, 179–199, 254–274, 286–306, 383–403, 422–442, 489–509, and 528–548; these read AEIALTLSLAVAIGWPLGVFL, AYALALLAFNLIGFVFVYAVL, PQGFPGLSGHLAFNTAISFIT, LVLTVQNFVSAATGATVAAAL, LYLLLPLAFVVAVVLAALGLP, LTNLITAISINTLGWAAFFAF, ALVIAAFVLLFAGAVGVYATE, GVAIMVVMALLSVFVAGLMVG, ILAVVIIPLSMLGFSGIAAVL, LGIAMAMGRFMPIVAVLAIAG, and GGLFIGLLIGVILILGGLQFF.

It belongs to the KdpA family. In terms of assembly, the system is composed of three essential subunits: KdpA, KdpB and KdpC.

It localises to the cell inner membrane. Functionally, part of the high-affinity ATP-driven potassium transport (or Kdp) system, which catalyzes the hydrolysis of ATP coupled with the electrogenic transport of potassium into the cytoplasm. This subunit binds the periplasmic potassium ions and delivers the ions to the membrane domain of KdpB through an intramembrane tunnel. In Caulobacter vibrioides (strain ATCC 19089 / CIP 103742 / CB 15) (Caulobacter crescentus), this protein is Potassium-transporting ATPase potassium-binding subunit.